Reading from the N-terminus, the 67-residue chain is ATP synthase F(0) complex subunit 8 (67 aa).

The chain crosses the membrane as a helical span at residues 8–24; it reads TWFTTIVAMILSLFILM. Residue lysine 54 is modified to N6-acetyllysine; alternate. Residue lysine 54 is modified to N6-succinyllysine; alternate. Residue lysine 57 is modified to N6-acetyllysine.

The protein belongs to the ATPase protein 8 family. As to quaternary structure, component of the ATP synthase complex composed at least of ATP5F1A/subunit alpha, ATP5F1B/subunit beta, ATP5MC1/subunit c (homooctomer), MT-ATP6/subunit a, MT-ATP8/subunit 8, ATP5ME/subunit e, ATP5MF/subunit f, ATP5MG/subunit g, ATP5MK/subunit k, ATP5MJ/subunit j, ATP5F1C/subunit gamma, ATP5F1D/subunit delta, ATP5F1E/subunit epsilon, ATP5PF/subunit F6, ATP5PB/subunit b, ATP5PD/subunit d, ATP5PO/subunit OSCP. ATP synthase complex consists of a soluble F(1) head domain (subunits alpha(3) and beta(3)) - the catalytic core - and a membrane F(0) domain - the membrane proton channel (subunits c, a, 8, e, f, g, k and j). These two domains are linked by a central stalk (subunits gamma, delta, and epsilon) rotating inside the F1 region and a stationary peripheral stalk (subunits F6, b, d, and OSCP). Interacts with PRICKLE3.

It localises to the mitochondrion membrane. Its function is as follows. Subunit 8, of the mitochondrial membrane ATP synthase complex (F(1)F(0) ATP synthase or Complex V) that produces ATP from ADP in the presence of a proton gradient across the membrane which is generated by electron transport complexes of the respiratory chain. ATP synthase complex consist of a soluble F(1) head domain - the catalytic core - and a membrane F(1) domain - the membrane proton channel. These two domains are linked by a central stalk rotating inside the F(1) region and a stationary peripheral stalk. During catalysis, ATP synthesis in the catalytic domain of F(1) is coupled via a rotary mechanism of the central stalk subunits to proton translocation. In vivo, can only synthesize ATP although its ATP hydrolase activity can be activated artificially in vitro. Part of the complex F(0) domain. This chain is ATP synthase F(0) complex subunit 8, found in Oryctolagus cuniculus (Rabbit).